Consider the following 148-residue polypeptide: Putative nickel-responsive regulator (148 aa).

Residues His-88, His-99, His-101, and Cys-107 each coordinate Ni(2+).

It belongs to the transcriptional regulatory CopG/NikR family. Requires Ni(2+) as cofactor.

Its function is as follows. Transcriptional regulator. The sequence is that of Putative nickel-responsive regulator from Helicobacter pylori (strain HPAG1).